Here is a 189-residue protein sequence, read N- to C-terminus: Large ribosomal subunit protein uL5 (189 aa).

It belongs to the universal ribosomal protein uL5 family. In terms of assembly, part of the 50S ribosomal subunit; part of the 5S rRNA/L5/L18/L25 subcomplex. Contacts the 5S rRNA and the P site tRNA. Forms a bridge to the 30S subunit in the 70S ribosome.

This is one of the proteins that bind and probably mediate the attachment of the 5S RNA into the large ribosomal subunit, where it forms part of the central protuberance. In the 70S ribosome it contacts protein S13 of the 30S subunit (bridge B1b), connecting the 2 subunits; this bridge is implicated in subunit movement. Contacts the P site tRNA; the 5S rRNA and some of its associated proteins might help stabilize positioning of ribosome-bound tRNAs. The polypeptide is Large ribosomal subunit protein uL5 (Parafrankia sp. (strain EAN1pec)).